Here is a 152-residue protein sequence, read N- to C-terminus: Transcriptional regulator MraZ (152 aa).

2 consecutive SpoVT-AbrB domains span residues 5-52 (LNPI…THPQ) and 81-124 (ATEV…GKSQ).

This sequence belongs to the MraZ family. In terms of assembly, forms oligomers.

It is found in the cytoplasm. The protein resides in the nucleoid. This is Transcriptional regulator MraZ from Coxiella burnetii (strain Dugway 5J108-111).